Consider the following 529-residue polypeptide: Cytochrome P450 monooxygenase 136 (529 aa).

Residues 9 to 29 form a helical membrane-spanning segment; that stretch reads SPLALAVLSIATCQLALVWWY. Cysteine 447 is a heme binding site.

This sequence belongs to the cytochrome P450 family. Heme serves as cofactor.

It localises to the membrane. The protein operates within secondary metabolite biosynthesis. Cytochrome P450 monooxygenase that is able to use delta(6)-protoilludene as a substrate to produce delta(6)-protoilludene-5-ol. In Postia placenta (strain ATCC 44394 / Madison 698-R) (Brown rot fungus), this protein is Cytochrome P450 monooxygenase 136.